The sequence spans 251 residues: MFGFRLSVLLFAVCSLSACSCMFVNSCKYPPSQWCDSRDIAAQCGVLEQCMKFNASPVTVSLYYESLCPGCREFLVSQLVPTFIMLSDIMNIELVPYGNAQEKDDQGNYTFICQHGEDECRGNMIETCLLKALGPKAIPVIFCMESGADVLKAAQPCLGVYFPDTTWDSVMKCVTGDEGNKLMHQNALKTNALKPPHEYVPWITINGEHTDDLQDKATNSLFNLVCSLYKGEKPAACGQGLKKRTNSYCMN.

An N-terminal signal peptide occupies residues 1-21 (MFGFRLSVLLFAVCSLSACSC). The 39-residue stretch at 22 to 60 (MFVNSCKYPPSQWCDSRDIAAQCGVLEQCMKFNASPVTV) folds into the Saposin A-type domain. Cys68 and Cys71 are disulfide-bonded. N-linked (GlcNAc...) asparagine glycosylation occurs at Asn108.

This sequence belongs to the GILT family. Dimer; disulfide-linked. As to expression, highly expressed in spleen and kidney. Also detected at lower levels in liver, heart, brain, intestine and gill.

The protein localises to the secreted. The protein resides in the lysosome. In terms of biological role, lysosomal thiol reductase that can reduce protein disulfide bonds. May facilitate the complete unfolding of proteins destined for lysosomal degradation. Plays an important role in antigen processing. This is Gamma-interferon-inducible lysosomal thiol reductase from Carassius auratus (Goldfish).